Here is a 525-residue protein sequence, read N- to C-terminus: GMP synthase [glutamine-hydrolyzing] (525 aa).

One can recognise a Glutamine amidotransferase type-1 domain in the interval 9–207; it reads RILILDFGSQ…VLDICRCTPL (199 aa). C86 functions as the Nucleophile in the catalytic mechanism. Active-site residues include H181 and E183. A GMPS ATP-PPase domain is found at 208–400; the sequence is WTPAKIIEDA…LGLPYDMLYR (193 aa). 235-241 is an ATP binding site; the sequence is SGGVDSS.

Homodimer.

The catalysed reaction is XMP + L-glutamine + ATP + H2O = GMP + L-glutamate + AMP + diphosphate + 2 H(+). It participates in purine metabolism; GMP biosynthesis; GMP from XMP (L-Gln route): step 1/1. Functionally, catalyzes the synthesis of GMP from XMP. The chain is GMP synthase [glutamine-hydrolyzing] from Sodalis glossinidius (strain morsitans).